The sequence spans 368 residues: uncharacterized protein (368 aa).

Belongs to the Gfo/Idh/MocA family.

This is an uncharacterized protein from Schizosaccharomyces pombe (strain 972 / ATCC 24843) (Fission yeast).